We begin with the raw amino-acid sequence, 546 residues long: CTP synthase (546 aa).

Residues 1–266 (MTTRYIFVTG…DQLVTKRFGI (266 aa)) form an amidoligase domain region. Ser-14 serves as a coordination point for CTP. Ser-14 serves as a coordination point for UTP. Residues 15–20 (SLGKGI) and Asp-72 contribute to the ATP site. Mg(2+) contacts are provided by Asp-72 and Glu-140. Residues 147–149 (DIE), 187–192 (KTKPTQ), and Lys-223 contribute to the CTP site. UTP-binding positions include 187 to 192 (KTKPTQ) and Lys-223. An ATP-binding site is contributed by 239–241 (KDV). In terms of domain architecture, Glutamine amidotransferase type-1 spans 291-542 (TIGMVGKYIE…VAAAYTYQKR (252 aa)). Residue Gly-352 participates in L-glutamine binding. Cys-379 acts as the Nucleophile; for glutamine hydrolysis in catalysis. L-glutamine-binding positions include 380–383 (LGMQ), Glu-403, and Arg-470. Residues His-515 and Glu-517 contribute to the active site.

This sequence belongs to the CTP synthase family. As to quaternary structure, homotetramer.

The enzyme catalyses UTP + L-glutamine + ATP + H2O = CTP + L-glutamate + ADP + phosphate + 2 H(+). It carries out the reaction L-glutamine + H2O = L-glutamate + NH4(+). It catalyses the reaction UTP + NH4(+) + ATP = CTP + ADP + phosphate + 2 H(+). Its pathway is pyrimidine metabolism; CTP biosynthesis via de novo pathway; CTP from UDP: step 2/2. Its activity is regulated as follows. Allosterically activated by GTP, when glutamine is the substrate; GTP has no effect on the reaction when ammonia is the substrate. The allosteric effector GTP functions by stabilizing the protein conformation that binds the tetrahedral intermediate(s) formed during glutamine hydrolysis. Inhibited by the product CTP, via allosteric rather than competitive inhibition. Catalyzes the ATP-dependent amination of UTP to CTP with either L-glutamine or ammonia as the source of nitrogen. Regulates intracellular CTP levels through interactions with the four ribonucleotide triphosphates. The protein is CTP synthase of Shewanella halifaxensis (strain HAW-EB4).